Reading from the N-terminus, the 455-residue chain is Ammonium transporter Rh type B (455 aa).

Residues 1–10 (MARVPRHRRL) lie on the Cytoplasmic side of the membrane. The chain crosses the membrane as a helical span at residues 11-31 (VLPLLCLLFQGATALLFAIFV). The Extracellular portion of the chain corresponds to 32-58 (RYNHETDAALWHWGNHSNVDNEFYFRY). N46 carries N-linked (GlcNAc...) asparagine glycosylation. The helical transmembrane segment at 59–79 (PSFQDVHVMVFVGFGFLMVFL) threads the bilayer. Topologically, residues 80-83 (QRYG) are cytoplasmic. Residues 84–104 (FSSVGFTFLVASLTLQWATLL) form a helical membrane-spanning segment. The Extracellular segment spans residues 105–121 (QGFLHSFHGGHIHVGVE). The chain crosses the membrane as a helical span at residues 122-142 (SLINADFCAGAVLISFGAVLG). Residues 143–146 (KTGP) are Cytoplasmic-facing. A helical membrane pass occupies residues 147–167 (AQLLLMALLEAVLFSVNEFIL). Over 168-175 (LSLLGVRD) the chain is Extracellular. The helical transmembrane segment at 176-198 (AGGSMTIHTFGAYFGLFLSWVLY) threads the bilayer. Residues 199–216 (RSQLEKSRHRQSSVYNSD) lie on the Cytoplasmic side of the membrane. The helical transmembrane segment at 217–237 (LFAMIGTIFLWVFWPSFNSAP) threads the bilayer. The Extracellular portion of the chain corresponds to 238–248 (TALGDGQHRTV). The helical transmembrane segment at 249–269 (VNTYYSLTASTLSTFALSALV) threads the bilayer. At 270 to 279 (SGDGRLDMVH) the chain is on the cytoplasmic side. A helical membrane pass occupies residues 280-300 (VQNAALAGGVVVGTSSEMMLT). Position 301 (P301) is a topological domain, extracellular. Residues 302–322 (FGALAAGFLAGTVSTLGYKFF) traverse the membrane as a helical segment. The Cytoplasmic segment spans residues 323–343 (TPILESRFKLQDTCGVHNLHG). A helical transmembrane segment spans residues 344 to 364 (MPGVLGAILGVVVAALATHEA). The Extracellular segment spans residues 365 to 390 (YGDGLQSVFPLIAKGQRSATSQAVYQ). A helical membrane pass occupies residues 391 to 411 (LFGMFVTLVFASVGGSLGGLL). Residues 412-455 (LRLPFLDSPPDSQCFEDQVYWEVPGEQETETQRPLRGGESDTRA) are Cytoplasmic-facing. Residues 413 to 421 (RLPFLDSPP) form an interaction with ANK3 region. The segment at 434–455 (VPGEQETETQRPLRGGESDTRA) is disordered. Residues 441–455 (ETQRPLRGGESDTRA) show a composition bias toward basic and acidic residues.

Belongs to the ammonium transporter (TC 2.A.49) family. Rh subfamily. As to quaternary structure, interacts (via C-terminus) with ANK2 and ANK3; required for targeting to the basolateral membrane. N-glycosylated. Expressed in kidney by connecting segments and collecting tubules. Also expressed in liver by perivenous hepatocytes. Expressed in the forestomach and the fundus of the stomach. Expressed in duodenum, jejunum, ileum and colon at the level of villous (at protein level). Specifically expressed in kidney where it is restricted to the epithelial linings of the convoluted tubules and the loop of Henle. Also detected in ovary. Expressed by hepatocytes and dermal hair follicles and papillae.

The protein resides in the cell membrane. It is found in the basolateral cell membrane. It carries out the reaction NH4(+)(in) = NH4(+)(out). The enzyme catalyses methylamine(out) = methylamine(in). The catalysed reaction is CO2(out) = CO2(in). Inhibited by amiloride. Functionally, ammonium transporter involved in the maintenance of acid-base homeostasis. Transports ammonium and its related derivative methylammonium across the basolateral plasma membrane of epithelial cells likely contributing to renal transepithelial ammonia transport and ammonia metabolism. May transport either NH4(+) or NH3 ammonia species predominantly mediating an electrogenic NH4(+) transport. May act as a CO2 channel providing for renal acid secretion. The sequence is that of Ammonium transporter Rh type B (Rhbg) from Mus musculus (Mouse).